The primary structure comprises 212 residues: Ribosomal RNA large subunit methyltransferase E (212 aa).

The S-adenosyl-L-methionine site is built by glycine 57, tryptophan 59, aspartate 77, aspartate 93, and aspartate 122. Lysine 162 serves as the catalytic Proton acceptor.

Belongs to the class I-like SAM-binding methyltransferase superfamily. RNA methyltransferase RlmE family.

The protein localises to the cytoplasm. It catalyses the reaction uridine(2552) in 23S rRNA + S-adenosyl-L-methionine = 2'-O-methyluridine(2552) in 23S rRNA + S-adenosyl-L-homocysteine + H(+). Functionally, specifically methylates the uridine in position 2552 of 23S rRNA at the 2'-O position of the ribose in the fully assembled 50S ribosomal subunit. This is Ribosomal RNA large subunit methyltransferase E from Coxiella burnetii (strain RSA 331 / Henzerling II).